The chain runs to 118 residues: Large ribosomal subunit protein bL17 (118 aa).

It belongs to the bacterial ribosomal protein bL17 family. In terms of assembly, part of the 50S ribosomal subunit. Contacts protein L32.

The sequence is that of Large ribosomal subunit protein bL17 from Campylobacter hominis (strain ATCC BAA-381 / DSM 21671 / CCUG 45161 / LMG 19568 / NCTC 13146 / CH001A).